Consider the following 540-residue polypeptide: MLHKYLKLICLLAAICVLCIISQNSTKIWGALKLPNSHYYSNTSMISSIPKMSVSPVKSLTETELRVKEILEKLDRLIPPRPFTHVNTTTSATHSTATILNPQDKYCVGDQLDILLEVRDYLGHQKEYGGDFLRARMFSPALKAGASGKVTDFNNGTYLVSFTLFWEGQVSLSVLLIHPSEGASALWRARNQGYDRIIFKGQFVNGTSHVFTECSLTLNSNTEECKYLNGRDQDVFYCMKPQHMPCEALTHVTSRNRDISYLTSKEKNLFHRSKVGVEIMKNQHIDVSQCNKSKEVKEKCQIGMKIPVPGGYTLQGRWLTTFCNQIQLDTAKISGCLKGKLIYLMGDSTLRQWIYYLPKVMKTLKFFDLHETGNFKKHLLLDAEKHTQIQWKKHSHPFVTYQLFSVIDHGYIPQEIDRLIGDKDTVIVITFGQHFRPFPIDIFIRRAISVRQAIERLFLRSPATKVIVKTENIREMHIEAERFGDFHGYIQYLTLKDIFKDLNVGVVDAWDMTIAYGTNNVHPPDQVIGNQINMFLNYIC.

A signal peptide spans 1 to 22 (MLHKYLKLICLLAAICVLCIIS). Residues Asn-24, Asn-42, Asn-87, Asn-155, Asn-205, and Asn-291 are each glycosylated (N-linked (GlcNAc...) asparagine).

Belongs to the NXPE family. Intestine, and to a lesser extent in kidney.

It is found in the secreted. The sequence is that of NXPE family member 1 (NXPE1) from Oryctolagus cuniculus (Rabbit).